Reading from the N-terminus, the 154-residue chain is Large ribosomal subunit protein uL13 (154 aa).

Belongs to the universal ribosomal protein uL13 family. In terms of assembly, part of the 50S ribosomal subunit.

Its function is as follows. This protein is one of the early assembly proteins of the 50S ribosomal subunit, although it is not seen to bind rRNA by itself. It is important during the early stages of 50S assembly. The polypeptide is Large ribosomal subunit protein uL13 (Rhizobium etli (strain ATCC 51251 / DSM 11541 / JCM 21823 / NBRC 15573 / CFN 42)).